The following is a 931-amino-acid chain: MLERPFFSRHIGLRPDEKQKMLDIVAVDSIDTLVSQALPHSIHLGRPLNLPKAVSEGQALEELSKMMERNYLHKSFIGQGYHGTYVPPVILRNLFENPAWYTAYTPYQAEISQGRLELLFYFQTLISELTGLPVAAASLLDEATALAEAITVAFRFTREKKMKISLQSLLHPQILSVVQTRAETQGLQVSKNSEICSDTAAIVLSWPDTKGSFNDYSEVIKEAKAKGALVIVVADPLALTLMEAPAKWGADIVVGSMQRYGVPMGFGGPHAGYLAVSDALTRLIPGRIVGQSVDTKGRVGFRLALQTREQHIRRDKATSNICTAQALLANMATAYAVWHGPQGLQEIAQRVHHLTCRFVGGLEAVGISCEGEYFFDCVSIVVKGKAREIACQAKAGGRLIRVLDDDRVVINFDELSTQEDAHALAQLFGAGLVDQASPRLMGKGRDTTFLSQPFFHAVHSETDMMRFLRRLSDKDLALDRAMIPLGSCTMKLNAAAELMPVSWPTVANIHPFASREDAVGYQEMIHQLNAWLCEITGFAQVSFQPNSGAQGEYAGLLAIRRYHQSRGEHQRTLCLIPASAHGTNPASAHMAGMEVVVVKCLNDGDVDLDDLKMKAQLYKERLAALMITYPSTHGVYEESIKDICSLIHENGGQVYFDGANLNALVGLARPADIGADVCHMNLHKTFAIPHGGGGPGVGPIGVVEHLKPFLPGHEQEGTTHAVSAAPYGSASILVITWMYIRMMGAEGLKYATQTAILNANYIAARLSQVYSILYRGKHGRVAHECIVDTRVLKEQYGVSVDDIAKRLIDYGFHAPTMSFPVPGTLMIEPTESEPKAEIDRFCDALLSIAEEAKKIGSGVWPKDDNPLVHAPHTLVDTLDDTWARPYSRQEAAFPNCSLDPANKYWPPVSRIDNVAGDRMLICSCPPLGNTY.

Lys684 carries the post-translational modification N6-(pyridoxal phosphate)lysine.

Belongs to the GcvP family. In terms of assembly, the glycine cleavage system is composed of four proteins: P, T, L and H. The cofactor is pyridoxal 5'-phosphate.

It carries out the reaction N(6)-[(R)-lipoyl]-L-lysyl-[glycine-cleavage complex H protein] + glycine + H(+) = N(6)-[(R)-S(8)-aminomethyldihydrolipoyl]-L-lysyl-[glycine-cleavage complex H protein] + CO2. Its function is as follows. The glycine cleavage system catalyzes the degradation of glycine. The P protein binds the alpha-amino group of glycine through its pyridoxal phosphate cofactor; CO(2) is released and the remaining methylamine moiety is then transferred to the lipoamide cofactor of the H protein. This Bartonella henselae (strain ATCC 49882 / DSM 28221 / CCUG 30454 / Houston 1) (Rochalimaea henselae) protein is Glycine dehydrogenase (decarboxylating).